The sequence spans 186 residues: Tumor necrosis factor alpha-induced protein 8-like protein 1 (186 aa).

The stretch at 37-70 (EVLDELYRVTKEYTRNRKEAQKIIKNLIKMVVKL) forms a coiled coil.

This sequence belongs to the TNFAIP8 family.

The protein localises to the cytoplasm. This is Tumor necrosis factor alpha-induced protein 8-like protein 1 (tnfaip8l1) from Danio rerio (Zebrafish).